The chain runs to 334 residues: Eukaryotic translation initiation factor 3 subunit H (334 aa).

The 133-residue stretch at 20–152 (VQCDGLAAMK…LKAYRLTPQA (133 aa)) folds into the MPN domain.

It belongs to the eIF-3 subunit H family. Component of the eukaryotic translation initiation factor 3 (eIF-3) complex.

It is found in the cytoplasm. In terms of biological role, component of the eukaryotic translation initiation factor 3 (eIF-3) complex, which is involved in protein synthesis of a specialized repertoire of mRNAs and, together with other initiation factors, stimulates binding of mRNA and methionyl-tRNAi to the 40S ribosome. The eIF-3 complex specifically targets and initiates translation of a subset of mRNAs involved in cell proliferation. The chain is Eukaryotic translation initiation factor 3 subunit H from Anopheles gambiae (African malaria mosquito).